Reading from the N-terminus, the 230-residue chain is MTTLPARPEAITFAPQHSALIVVDMQNAYASQGGYLDLAGFDVSATQPVIANIKTAVAAARAAGILIIWFQNGWDDQYVEAGGPGSPNFHKSNALKTMRNRPELQGTLLAKGGWDYQLVDELVPEPGDIVLPKPRYSGFFNTPLDSLLRSRGIRHLIFTGIATNVCVESTLRDGFFLEYFGVVLEDATHQAGPEFAQKAALFNIETFFGWVSTVADFCDAVSPPSLARIA.

Asp-24 acts as the Proton acceptor in catalysis. Lys-133 is a catalytic residue. Cys-166 acts as the Nucleophile in catalysis.

The protein belongs to the isochorismatase family. RutB subfamily.

It catalyses the reaction (Z)-3-ureidoacrylate + H2O + H(+) = (Z)-3-aminoacrylate + NH4(+) + CO2. The enzyme catalyses (Z)-3-ureidoacrylate + H2O = (Z)-3-aminoacrylate + carbamate + H(+). The catalysed reaction is (Z)-2-methylureidoacrylate + H2O + H(+) = (Z)-2-methylaminoacrylate + NH4(+) + CO2. Its function is as follows. Hydrolyzes ureidoacrylate to form aminoacrylate and carbamate. The carbamate hydrolyzes spontaneously, thereby releasing one of the nitrogen atoms of the pyrimidine ring as ammonia and one of its carbon atoms as CO2. This Enterobacter sp. (strain 638) protein is Ureidoacrylate amidohydrolase RutB.